The primary structure comprises 139 residues: Actin-depolymerizing factor 1 (139 aa).

The region spanning 5-139 (ASGMAVHDDC…GLDVIQSRAN (135 aa)) is the ADF-H domain.

This sequence belongs to the actin-binding proteins ADF family.

Its function is as follows. Actin-depolymerizing protein. Severs actin filaments (F-actin) and binds to actin monomers. The protein is Actin-depolymerizing factor 1 (ADF1) of Petunia hybrida (Petunia).